The chain runs to 290 residues: Probable aquaporin PIP2-1 (290 aa).

Helical transmembrane passes span 43–63 (AVIA…ATVI) and 80–100 (CGGV…FILV). The short motif at 112 to 114 (NPA) is the NPA 1 element. 3 consecutive transmembrane segments (helical) span residues 131-151 (ILYI…VKAF), 173-193 (GTGL…VFSA), and 207-227 (VLAP…TIPI). Residues 233-235 (NPA) carry the NPA 2 motif. A helical membrane pass occupies residues 255–275 (IFWVGPFVGAAIAAFYHQYIL).

This sequence belongs to the MIP/aquaporin (TC 1.A.8) family. PIP (TC 1.A.8.11) subfamily. Expressed in roots, leaves and anthers.

The protein localises to the cell membrane. Aquaporins facilitate the transport of water and small neutral solutes across cell membranes. The polypeptide is Probable aquaporin PIP2-1 (PIP2-1) (Oryza sativa subsp. japonica (Rice)).